A 1348-amino-acid polypeptide reads, in one-letter code: MAQHGDGKQYMELDQSKGTEMRNKALMDNNMLLETFIQMSEKGRLSSNYMTVTAIVRDVEQESFAFASECGILDVSQKMLKNFKSLCAILRSIRPDASSNNAFAYWKEVICKWLCATLLSTRPDAGSDDGFAYWKEVIWKTKQEFRAKYPFPETPFAANKVDDVNTHSPKFVMEFIDAVVGNLNVLVKINDPSSLLFVPGPNEQTEQVLKELKLLRFFVCFVSNKCIEPQYRRTTFYTHALIEASHITMVVWLHFPIYGNGNQDLNPGDVSRLLSDFMEMKIKSIQLGISRNNIYIDVLKALKSTIPQAQNKHAAESGIEETPTHNLMVGLSDQMANLREMICLLRDNLIHLPILDLEFHVQDMDSVIVDAGLLFYSLYDIKGEKEDKTLEDINQALGFDIPRNIEPIKAMVYLVMQKAFQSNLPRIHGLGYVDFLLKNLKDFQGRYSDSLAFLKNQLQVIQTEFESLQPFLKVVVEEPHNRLKTLNEDCATQIIRKAYEVEYVVDACINKEVPQWCIERWLLDIIEEITCIKANIQEKNTVEDTMKTVIGRTSSQLTRTPRMNEEIVGFEDVIENLRKKLLNGTKGQDVISIHGMPGLGKTTLANRLYSDRSVVSQFDICAQCCVSQVYSYKELLLALLCDAVGEDSARRELPDNELADMFRKTLLPRRYLILVDDVWENSAWDDLRGCFPDVNNRSRIILTTRHHEVAKYASVHSDPLHLRMFGEDESWKLLEKKVFGEERCSPLLKNVGLRIAKMCGRLPLSIVLVAGILSEMEKEVECWEQVANNLGSHIHNDSRAIVDQSYHVLPFHLKSCFLYFGAFLEDRVINVSRLIRLWISESFIKSCEGRRLEDIAEGYLENLIGRNLVMVTQRANSDGKVKACRLHDVLLDFCKERAAEENFLLRIKWDQSTKPSSCVYSHKQHAHLAFTGMDNLLEWSTSGSLVGSVLFKNYDPNFAYNSCSSHAFAISRILPNFKFLKVLDLEHQFFIDFIPTELLYLRYLSARIGQNSIPSSISNLWNLETLILKDVRYMRRCRLLQPNTVWDMVKLRHLHIPYFSTEKEEALLENSAKLYDLETLSTPYFFRVENAELMLRKTPNLRKLICAIECLEYPPQYHVLNFPITLEILKLYRSSDFKVIPFCISAQNLKYLKLSGFYLNSQYLSETADHLKHLEVLKLHNIEFGGHSEWEVSNAKFPQLKILKLEYVSLMKLIVADDAFPNLEQLVLHDCEDLMEIPSCFMDILSLKYIEVDNCSESVVKSARNIQETQVEDSQNNNFKLVIVKKMVLKFDTSNEKEISKAFDRLLSLPGIQSIAVDSNEKKFIVIGDMDADEVRLVVGKLINRGML.

Coiled coils occupy residues 446-469 and 561-583; these read RYSD…ESLQ and PRMN…KLLN. The NB-ARC domain occupies 552–848; that stretch reads RTSSQLTRTP…ISESFIKSCE (297 aa). 595–602 contributes to the ATP binding site; sequence GMPGLGKT. LRR repeat units follow at residues 977–1001, 1051–1074, 1123–1147, 1151–1170, 1171–1194, 1197–1219, 1220–1244, and 1309–1332; these read FKFL…LLYL, LRHL…SAKL, PITL…ISAQ, YLKL…TADH, LKHL…EVSN, FPQL…ADDA, FPNL…FMDI, and LPGI…DMDA. Positions 1284-1348 constitute an HMA domain; it reads VKKMVLKFDT…VGKLINRGML (65 aa).

Belongs to the disease resistance NB-LRR family.

Its subcellular location is the cytoplasm. It localises to the membrane. Functionally, confers resistance to late blight (Phytophthora infestans) races carrying the avirulence gene Avr1. Resistance proteins guard the plant against pathogens that contain an appropriate avirulence protein via an indirect interaction with this avirulence protein. That triggers a defense system including the hypersensitive response, which restricts the pathogen growth. This Solanum demissum (Wild potato) protein is Putative late blight resistance protein homolog R1B-12 (R1B-12).